The following is a 313-amino-acid chain: tRNA dimethylallyltransferase (313 aa).

Residue 10–17 (GPTASGKT) coordinates ATP. 12–17 (TASGKT) contributes to the substrate binding site. 3 interaction with substrate tRNA regions span residues 35–38 (DSAM), 159–163 (QRIQR), and 240–245 (RCVGYR).

This sequence belongs to the IPP transferase family. Monomer. Mg(2+) serves as cofactor.

The enzyme catalyses adenosine(37) in tRNA + dimethylallyl diphosphate = N(6)-dimethylallyladenosine(37) in tRNA + diphosphate. Catalyzes the transfer of a dimethylallyl group onto the adenine at position 37 in tRNAs that read codons beginning with uridine, leading to the formation of N6-(dimethylallyl)adenosine (i(6)A). The protein is tRNA dimethylallyltransferase of Legionella pneumophila subsp. pneumophila (strain Philadelphia 1 / ATCC 33152 / DSM 7513).